Here is a 412-residue protein sequence, read N- to C-terminus: Adenylosuccinate synthetase (412 aa).

GTP is bound by residues 12–18 and 40–42; these read GDEGKGK and GHE. Asp13 (proton acceptor) is an active-site residue. 2 residues coordinate Mg(2+): Asp13 and Gly40. IMP contacts are provided by residues 13 to 16, 38 to 41, Arg134, Asn212, Thr227, and Arg291; these read DEGK and NAGH. His41 serves as the catalytic Proton donor. 287–293 provides a ligand contact to substrate; the sequence is TSTGRRR. GTP contacts are provided by residues Arg293, 318–320, and 400–402; these read KLD and GTG.

This sequence belongs to the adenylosuccinate synthetase family. Homodimer. It depends on Mg(2+) as a cofactor.

It localises to the cytoplasm. The catalysed reaction is IMP + L-aspartate + GTP = N(6)-(1,2-dicarboxyethyl)-AMP + GDP + phosphate + 2 H(+). The protein operates within purine metabolism; AMP biosynthesis via de novo pathway; AMP from IMP: step 1/2. In terms of biological role, plays an important role in the de novo pathway and in the salvage pathway of purine nucleotide biosynthesis. Catalyzes the first committed step in the biosynthesis of AMP from IMP. The polypeptide is Adenylosuccinate synthetase (Fusarium vanettenii (strain ATCC MYA-4622 / CBS 123669 / FGSC 9596 / NRRL 45880 / 77-13-4) (Fusarium solani subsp. pisi)).